The following is a 341-amino-acid chain: N-acetyl-gamma-glutamyl-phosphate reductase (341 aa).

The active site involves C145.

Belongs to the NAGSA dehydrogenase family. Type 1 subfamily.

It is found in the cytoplasm. The enzyme catalyses N-acetyl-L-glutamate 5-semialdehyde + phosphate + NADP(+) = N-acetyl-L-glutamyl 5-phosphate + NADPH + H(+). It participates in amino-acid biosynthesis; L-arginine biosynthesis; N(2)-acetyl-L-ornithine from L-glutamate: step 3/4. Catalyzes the NADPH-dependent reduction of N-acetyl-5-glutamyl phosphate to yield N-acetyl-L-glutamate 5-semialdehyde. This Methanothrix thermoacetophila (strain DSM 6194 / JCM 14653 / NBRC 101360 / PT) (Methanosaeta thermophila) protein is N-acetyl-gamma-glutamyl-phosphate reductase.